The chain runs to 360 residues: MLVYLAEYLTQFYSGFNVFSYVTFRAILGLMTALMFSLWWGPKMIERLQLLQIGQVVRNDGPESHFSKRGTPTMGGLLILAGIFISVLLWGDLGSRYVWVVLFVLASFGTIGFIDDYRKVVRKDTKGLIARWKYLLQSIAAIVIAVYLYASADTAGETQLVVPFFKDVMPQLGAFFIVLVYFTIVGSSNAVNLTDGLDGLAIMPTVMVAAAFALIAYLSGHVQFANYLHIPYLPGAGELVIVCTAIVGAGLGFLWFNTYPAQVFMGDVGSLALGAALGAIAVLVRQEILLVIMGGVFVMETVSVILQVGSYKLRGQRIFRMAPIHHHYELKGWPEPRVIVRFWIISLFLVLLGLATLKLR.

Transmembrane regions (helical) follow at residues 21-41 (YVTF…LWWG), 74-94 (MGGL…GDLG), 97-117 (YVWV…IDDY), 135-155 (LLQS…ADTA), 168-188 (VMPQ…VGSS), 199-219 (GLAI…AYLS), 236-256 (AGEL…FLWF), 263-283 (VFMG…IAVL), 288-308 (ILLV…ILQV), and 338-358 (VIVR…ATLK).

It belongs to the glycosyltransferase 4 family. MraY subfamily. It depends on Mg(2+) as a cofactor.

The protein localises to the cell inner membrane. It catalyses the reaction UDP-N-acetyl-alpha-D-muramoyl-L-alanyl-gamma-D-glutamyl-meso-2,6-diaminopimeloyl-D-alanyl-D-alanine + di-trans,octa-cis-undecaprenyl phosphate = di-trans,octa-cis-undecaprenyl diphospho-N-acetyl-alpha-D-muramoyl-L-alanyl-D-glutamyl-meso-2,6-diaminopimeloyl-D-alanyl-D-alanine + UMP. Its pathway is cell wall biogenesis; peptidoglycan biosynthesis. Catalyzes the initial step of the lipid cycle reactions in the biosynthesis of the cell wall peptidoglycan: transfers peptidoglycan precursor phospho-MurNAc-pentapeptide from UDP-MurNAc-pentapeptide onto the lipid carrier undecaprenyl phosphate, yielding undecaprenyl-pyrophosphoryl-MurNAc-pentapeptide, known as lipid I. This chain is Phospho-N-acetylmuramoyl-pentapeptide-transferase, found in Shewanella piezotolerans (strain WP3 / JCM 13877).